The primary structure comprises 338 residues: MLLSKNSQLILRHRKKFKTKKVFFSGNIQDDFPLSLSTMRTKINFHKYNDCIDFKKKIMNNNIVHNNLLISQEMIQNCDVIIYYWPKDKSEAKFQLMNIISCSPINTEIFIVGNNSSGVKSAPLMLKKWIELEKIDSAKHSILISGLIKKKAIFVLEDFFKTHLWKNLIIKSLPGVFGHKKIDSGSKLLASTFSNRITGKVLDIGCGTGFLSASLLYFSPDAILTLVDNNMYALKCSQYTLNSNKFNGKIVYSNLYSNVFKKFDLIISNPPFHNDLQINFNIIEKMICGAKKYLTKTGELRFVTSRFINCHFLLNKFFQKYYVIKETSQYKVYQAFYK.

It belongs to the methyltransferase superfamily. RsmC family. In terms of assembly, monomer.

Its subcellular location is the cytoplasm. It catalyses the reaction guanosine(1207) in 16S rRNA + S-adenosyl-L-methionine = N(2)-methylguanosine(1207) in 16S rRNA + S-adenosyl-L-homocysteine + H(+). Specifically methylates the guanine in position 1207 of 16S rRNA in the 30S particle. In Buchnera aphidicola subsp. Acyrthosiphon pisum (strain APS) (Acyrthosiphon pisum symbiotic bacterium), this protein is Ribosomal RNA small subunit methyltransferase C.